The sequence spans 88 residues: Large ribosomal subunit protein eL31 (88 aa).

It belongs to the eukaryotic ribosomal protein eL31 family.

The sequence is that of Large ribosomal subunit protein eL31 from Saccharolobus islandicus (strain Y.N.15.51 / Yellowstone #2) (Sulfolobus islandicus).